A 408-amino-acid polypeptide reads, in one-letter code: Multidrug resistance protein MdtG (408 aa).

The next 11 membrane-spanning stretches (helical) occupy residues 16–36, 58–78, 92–112, 115–135, 146–166, 173–193, 224–244, 256–276, 290–310, 319–339, and 378–398; these read LIVAWLGCFLTGAAFSLVMPF, IVFSITFLFSAIASPFWGGLA, LGMGIVMVLMGLAQNIWQFLI, ALLGLLGGFVPNANALIATQV, TLSTGGVSGALLGPMAGGLLA, PVFFITASVLILCFFVTLFCI, LFVTTLIIQVATGSIAPILTL, VAFISGMIASVPGVAALLSAP, ILITALIFSVLLLIPMSYVQT, FLLGAADGALLPAVQTLLVYN, and AVFLVTAGVVLFNAVYSWNSL.

Belongs to the major facilitator superfamily. DHA1 family. MdtG (TC 2.A.1.2.20) subfamily.

The protein resides in the cell inner membrane. In terms of biological role, confers resistance to fosfomycin and deoxycholate. The polypeptide is Multidrug resistance protein MdtG (Escherichia coli O127:H6 (strain E2348/69 / EPEC)).